Consider the following 388-residue polypeptide: Phosphoglycerate kinase (388 aa).

Residues 21-23 (DLN), Arg-36, 59-62 (HLGR), Arg-114, and Arg-147 each bind substrate. ATP is bound by residues Lys-198, Glu-315, and 341-344 (GGDT).

It belongs to the phosphoglycerate kinase family. Monomer.

Its subcellular location is the cytoplasm. It catalyses the reaction (2R)-3-phosphoglycerate + ATP = (2R)-3-phospho-glyceroyl phosphate + ADP. It participates in carbohydrate degradation; glycolysis; pyruvate from D-glyceraldehyde 3-phosphate: step 2/5. The protein is Phosphoglycerate kinase of Hahella chejuensis (strain KCTC 2396).